A 768-amino-acid polypeptide reads, in one-letter code: Phosphoribosylformylglycinamidine synthase subunit PurL (768 aa).

Residue His-46 is part of the active site. ATP is bound by residues Tyr-49 and Lys-88. Mg(2+) is bound at residue Glu-90. Substrate contacts are provided by residues 91–94 (SHNH) and Arg-113. Catalysis depends on His-92, which acts as the Proton acceptor. Asp-114 contributes to the Mg(2+) binding site. Gln-237 contacts substrate. Residue Asp-265 coordinates Mg(2+). Residue 309–311 (ESQ) participates in substrate binding. Residues Asp-514 and Gly-551 each contribute to the ATP site. Mg(2+) is bound at residue Asn-552. Substrate is bound at residue Ser-554.

This sequence belongs to the FGAMS family. As to quaternary structure, monomer. Part of the FGAM synthase complex composed of 1 PurL, 1 PurQ and 2 PurS subunits.

The protein localises to the cytoplasm. The enzyme catalyses N(2)-formyl-N(1)-(5-phospho-beta-D-ribosyl)glycinamide + L-glutamine + ATP + H2O = 2-formamido-N(1)-(5-O-phospho-beta-D-ribosyl)acetamidine + L-glutamate + ADP + phosphate + H(+). Its pathway is purine metabolism; IMP biosynthesis via de novo pathway; 5-amino-1-(5-phospho-D-ribosyl)imidazole from N(2)-formyl-N(1)-(5-phospho-D-ribosyl)glycinamide: step 1/2. Its function is as follows. Part of the phosphoribosylformylglycinamidine synthase complex involved in the purines biosynthetic pathway. Catalyzes the ATP-dependent conversion of formylglycinamide ribonucleotide (FGAR) and glutamine to yield formylglycinamidine ribonucleotide (FGAM) and glutamate. The FGAM synthase complex is composed of three subunits. PurQ produces an ammonia molecule by converting glutamine to glutamate. PurL transfers the ammonia molecule to FGAR to form FGAM in an ATP-dependent manner. PurS interacts with PurQ and PurL and is thought to assist in the transfer of the ammonia molecule from PurQ to PurL. The sequence is that of Phosphoribosylformylglycinamidine synthase subunit PurL from Synechocystis sp. (strain ATCC 27184 / PCC 6803 / Kazusa).